We begin with the raw amino-acid sequence, 209 residues long: A-type ATP synthase subunit D (209 aa).

Belongs to the V-ATPase D subunit family. As to quaternary structure, has multiple subunits, A(3), B(3), C, D, E, F, G, I and K(x); there may be a few other subunits as well.

The protein localises to the cell membrane. In terms of biological role, component of the A-type ATP synthase that produces ATP from ADP in the presence of a proton gradient across the membrane. The protein is A-type ATP synthase subunit D of Methanosarcina mazei (strain ATCC BAA-159 / DSM 3647 / Goe1 / Go1 / JCM 11833 / OCM 88) (Methanosarcina frisia).